Reading from the N-terminus, the 246-residue chain is Large ribosomal subunit protein uL2 (246 aa).

Residues 196–226 are disordered; sequence MSPYAHPHGGGSHQKGGTPVPKTAPPGQKVG.

The protein belongs to the universal ribosomal protein uL2 family. As to quaternary structure, part of the 50S ribosomal subunit. Forms a bridge to the 30S subunit in the 70S ribosome.

One of the primary rRNA binding proteins. Required for association of the 30S and 50S subunits to form the 70S ribosome, for tRNA binding and peptide bond formation. It has been suggested to have peptidyltransferase activity; this is somewhat controversial. Makes several contacts with the 16S rRNA in the 70S ribosome. The protein is Large ribosomal subunit protein uL2 of Pyrobaculum arsenaticum (strain DSM 13514 / JCM 11321 / PZ6).